Reading from the N-terminus, the 65-residue chain is Neurotoxin Bot2 (65 aa).

The region spanning 2 to 64 (RDAYIAQPEN…VPIRIEGKCH (63 aa)) is the LCN-type CS-alpha/beta domain. 4 disulfides stabilise this stretch: C12–C63, C16–C36, C22–C46, and C26–C48. F65 carries the post-translational modification Phenylalanine amide.

The protein belongs to the long (4 C-C) scorpion toxin superfamily. Sodium channel inhibitor family. Alpha subfamily. In terms of tissue distribution, expressed by the venom gland.

It localises to the secreted. Its function is as follows. Binds to sodium channels (Nav) and inhibits the inactivation of the activated channels, thereby blocking neuronal transmission. The sequence is that of Neurotoxin Bot2 from Buthus occitanus tunetanus (Common European scorpion).